The chain runs to 302 residues: Ribosomal RNA small subunit methyltransferase H (302 aa).

S-adenosyl-L-methionine-binding positions include Ala34–His36, Asp53, Phe80, Asp101, and Gln108. Residues Leu283–Arg302 form a disordered region. The segment covering Lys290–Arg302 has biased composition (basic residues).

It belongs to the methyltransferase superfamily. RsmH family.

The protein resides in the cytoplasm. The catalysed reaction is cytidine(1402) in 16S rRNA + S-adenosyl-L-methionine = N(4)-methylcytidine(1402) in 16S rRNA + S-adenosyl-L-homocysteine + H(+). Specifically methylates the N4 position of cytidine in position 1402 (C1402) of 16S rRNA. The protein is Ribosomal RNA small subunit methyltransferase H of Mycoplasma mobile (strain ATCC 43663 / 163K / NCTC 11711) (Mesomycoplasma mobile).